Reading from the N-terminus, the 375-residue chain is N5-carboxyaminoimidazole ribonucleotide synthase (375 aa).

Residues R108, K148, 153-159 (GYDGKGQ), 183-186 (EQYL), E191, H214, and 266-267 (NE) contribute to the ATP site. In terms of domain architecture, ATP-grasp spans 112 to 296 (KQTLLEANTQ…QFDTHILAIT (185 aa)).

The protein belongs to the PurK/PurT family. As to quaternary structure, homodimer.

It carries out the reaction 5-amino-1-(5-phospho-beta-D-ribosyl)imidazole + hydrogencarbonate + ATP = 5-carboxyamino-1-(5-phospho-D-ribosyl)imidazole + ADP + phosphate + 2 H(+). The protein operates within purine metabolism; IMP biosynthesis via de novo pathway; 5-amino-1-(5-phospho-D-ribosyl)imidazole-4-carboxylate from 5-amino-1-(5-phospho-D-ribosyl)imidazole (N5-CAIR route): step 1/2. Its function is as follows. Catalyzes the ATP-dependent conversion of 5-aminoimidazole ribonucleotide (AIR) and HCO(3)(-) to N5-carboxyaminoimidazole ribonucleotide (N5-CAIR). In Staphylococcus epidermidis (strain ATCC 35984 / DSM 28319 / BCRC 17069 / CCUG 31568 / BM 3577 / RP62A), this protein is N5-carboxyaminoimidazole ribonucleotide synthase.